The following is a 114-amino-acid chain: MGSRPCALGLFCCCSSCFCLCCPRHRPVSRLAAVVGGAAAVPAVVSGVTGLILSPSQSPIFIQPTPSPPMSPLRPGLDLVFANPPDHSAPLGVTRPSAPPLPHVVDLPQLGPRR.

Hydrophobic stretches follow at residues 6–22 (CALG…CLCC) and 33–53 (AVVG…GLIL). The interaction with host HPX stretch occupies residues 28-68 (VSRLAAVVGGAAAVPAVVSGVTGLILSPSQSPIFIQPTPSP). Positions 48–72 (VTGLILSPSQSPIFIQPTPSPPMSP) are interaction with the capsid protein. Ser-71 carries the phosphoserine; by host modification. Residues 72–114 (PLRPGLDLVFANPPDHSAPLGVTRPSAPPLPHVVDLPQLGPRR) form a homodimerization, and interaction with host AMBP/bikunin region. Positions 91-114 (LGVTRPSAPPLPHVVDLPQLGPRR) are disordered. Positions 95–104 (RPSAPPLPHV) are interaction with host SRC, HCK, FYN, PIK3R3 and GRB2. A PTAP/PSAP motif motif is present at residues 96–99 (PSAP).

It belongs to the hepevirus ORF3 protein family. In terms of assembly, forms homooligomers. Interacts with host SRC, HCK, FYN, PIK3R3 and GRB2 (via SH3 domain); binding does not activate the kinases. Interacts with host AMBP/bikunin and AMBP/alpha-1-microglobulin peptides. Interacts with host HPX/hemopexin. Interacts (when phosphorylated) with capsid protein ORF2. Interacts with host TSG101; this interaction plays a role in viral release from the host cell. Interacts with host SIRPA; this interaction down-regulates the phosphorylation of host IRF3. In terms of processing, palmitoylated in the N-terminus.

The protein localises to the host endoplasmic reticulum membrane. The protein resides in the host cytoplasm. Its subcellular location is the host cytoskeleton. It localises to the virion. It is found in the host cell membrane. Small multifunctional phosphoprotein involved in virion morphogenesis, egress and counteracting host innate immunity. Plays critical roles in the final steps of viral release by interacting with host TSG101, a member of the vacuolar protein-sorting pathway and using other cellular host proteins involved in vesicle formation pathway. Also acts as a viroporin and forms ion conductive pores allowing viral particle release. Impairs the generation of type I interferon by down-regulating host TLR3 and TLR7 as well as their downstream signaling pathways. Down-regulates the phosphorylation of host IRF3 via the interaction with host SIRP-alpha, thereby inhibiting IFN-I expression. Interacts with host microtubules. This is Protein ORF3 from Hepatitis E virus genotype 1 (isolate Human/Burma) (HEV-1).